Here is a 250-residue protein sequence, read N- to C-terminus: uncharacterized protein (250 aa).

4Fe-4S ferredoxin-type domains lie at Lys-38–Val-67, Lys-69–Gly-98, Lys-124–Arg-153, Lys-154–Glu-183, Arg-191–Asp-220, and Asp-220–Lys-249. [4Fe-4S] cluster contacts are provided by Cys-47, Cys-50, Cys-53, Cys-57, Cys-78, Cys-81, Cys-84, Cys-88, Cys-133, Cys-136, Cys-139, Cys-143, Cys-163, Cys-166, Cys-169, Cys-173, Cys-200, Cys-203, Cys-206, Cys-210, Cys-229, Cys-232, Cys-235, and Cys-239.

This is an uncharacterized protein from Methanocaldococcus jannaschii (strain ATCC 43067 / DSM 2661 / JAL-1 / JCM 10045 / NBRC 100440) (Methanococcus jannaschii).